Consider the following 230-residue polypeptide: MQPEVSDQIFYAFLTGGLCASSTSTTVTSSSDPFATVYEDKALASLRNHKEAERKRRARINSHLNKLRKLLSCNSKTDKSTLLAKVVQRVKELKQQTLEITDETIPSETDEISVLNIEDCSRGDDRRIIFKVSFCCEDRPELLKDLMETLKSLQMETLFADMTTVGGRTRNVLVVAADKEHHGVQSVNFLQNALKSLLERSSKSVMVGHGGGGGEERLKRRRALDHIIMV.

The bHLH domain occupies 44–93 (ASLRNHKEAERKRRARINSHLNKLRKLLSCNSKTDKSTLLAKVVQRVKEL).

In terms of assembly, homodimer.

The protein localises to the nucleus. The sequence is that of Putative transcription factor bHLH107 (BHLH107) from Arabidopsis thaliana (Mouse-ear cress).